Here is a 212-residue protein sequence, read N- to C-terminus: Probable NADH dehydrogenase [ubiquinone] iron-sulfur protein 8, mitochondrial (212 aa).

2 consecutive 4Fe-4S ferredoxin-type domains span residues 104–133 (RRYP…IEAE) and 143–172 (TRYD…EGPN). [4Fe-4S] cluster contacts are provided by cysteine 113, cysteine 116, cysteine 119, cysteine 123, cysteine 152, cysteine 155, cysteine 158, and cysteine 162.

The protein belongs to the complex I 23 kDa subunit family. As to quaternary structure, complex I is composed of 45 different subunits This is a component of the iron-sulfur (IP) fragment of the enzyme. [4Fe-4S] cluster is required as a cofactor.

It is found in the mitochondrion. It catalyses the reaction a ubiquinone + NADH + 5 H(+)(in) = a ubiquinol + NAD(+) + 4 H(+)(out). In terms of biological role, core subunit of the mitochondrial membrane respiratory chain NADH dehydrogenase (Complex I) that is believed to belong to the minimal assembly required for catalysis. Complex I functions in the transfer of electrons from NADH to the respiratory chain. The immediate electron acceptor for the enzyme is believed to be ubiquinone. This Caenorhabditis elegans protein is Probable NADH dehydrogenase [ubiquinone] iron-sulfur protein 8, mitochondrial.